The primary structure comprises 539 residues: Inosine-5'-monophosphate dehydrogenase (539 aa).

CBS domains follow at residues 140–196 (IIVN…DMPI) and 200–257 (MTRE…PRAC). NAD(+)-binding positions include D292 and 343-345 (GIG). 2 residues coordinate K(+): G345 and G347. IMP is bound at residue S348. C350 is a binding site for K(+). Residue C350 is the Thioimidate intermediate of the active site. IMP-binding positions include 383–385 (DGG), 406–407 (GS), and 430–434 (YRGMG). R446 serves as the catalytic Proton acceptor. E460 is an IMP binding site. K(+) is bound by residues E514 and H516. The tract at residues 517–539 (PHDIAITQEAPNYSPDVHSGDAG) is disordered.

Belongs to the IMPDH/GMPR family. Homotetramer. It depends on K(+) as a cofactor.

It carries out the reaction IMP + NAD(+) + H2O = XMP + NADH + H(+). It participates in purine metabolism; XMP biosynthesis via de novo pathway; XMP from IMP: step 1/1. Its activity is regulated as follows. Mycophenolic acid (MPA) is a non-competitive inhibitor that prevents formation of the closed enzyme conformation by binding to the same site as the amobile flap. In contrast, mizoribine monophosphate (MZP) is a competitive inhibitor that induces the closed conformation. MPA is a potent inhibitor of mammalian IMPDHs but a poor inhibitor of the bacterial enzymes. MZP is a more potent inhibitor of bacterial IMPDH. Its function is as follows. Catalyzes the conversion of inosine 5'-phosphate (IMP) to xanthosine 5'-phosphate (XMP), the first committed and rate-limiting step in the de novo synthesis of guanine nucleotides, and therefore plays an important role in the regulation of cell growth. In Rhodopirellula baltica (strain DSM 10527 / NCIMB 13988 / SH1), this protein is Inosine-5'-monophosphate dehydrogenase.